The following is a 630-amino-acid chain: Probable potassium transport system protein Kup 1 (630 aa).

Transmembrane regions (helical) follow at residues 15-35 (FAAL…TSPL), 59-79 (LSLI…TFIM), 109-129 (WIMI…MVTP), 145-165 (PALK…LFFV), 173-193 (VGAF…LLGV), 223-243 (LVAM…YADM), 255-275 (WFAF…ALIL), 297-317 (LVGL…SGAF), 345-365 (IYLP…VLGF), 374-394 (AYGI…TVVV), 405-425 (AGLL…ANIL), and 427-447 (IPDG…LMTT).

This sequence belongs to the HAK/KUP transporter (TC 2.A.72) family.

It localises to the cell inner membrane. The enzyme catalyses K(+)(in) + H(+)(in) = K(+)(out) + H(+)(out). Its function is as follows. Transport of potassium into the cell. Likely operates as a K(+):H(+) symporter. The sequence is that of Probable potassium transport system protein Kup 1 from Dechloromonas aromatica (strain RCB).